A 536-amino-acid polypeptide reads, in one-letter code: Heparanase (536 aa).

The signal sequence occupies residues 1 to 28 (MLRPLLLLWLWGRLGALTQGTPAGTAPT). Heparan sulfate group-binding positions include 55 to 57 (DAS) and Thr90. Residues 103–150 (PTSEERSYWQSQDNNDICGSERVSADVLRKLQMEWPFQELLLLREQYQ) constitute a propeptide, linker peptide. Cys120 and Cys172 are oxidised to a cystine. 151-155 (REFKN) contacts heparan sulfate group. N-linked (GlcNAc...) asparagine glycans are attached at residues Asn155, Asn193, and Asn210. Glu218 acts as the Proton donor in catalysis. Heparan sulfate group-binding positions include 263–273 (QPRGKTVKLLR), His289, and Arg296. The tract at residues 281-410 (EVIDSLTWHH…LLFKKLVGPK (130 aa)) is required for heterodimerization with the heparanase 8 kDa subunit. Residue Glu336 is the Nucleophile of the active site. Heparan sulfate group is bound by residues 341-343 (YGG) and 382-384 (GNY). Cysteines 430 and 535 form a disulfide. The N-linked (GlcNAc...) asparagine glycan is linked to Asn452. Positions 520–536 (FSYGFFVIRNAKIAACI) are required for transferring proheparanase to the Golgi apparatus, secretion and subsequent enzyme activity and for enhancement of PKB/AKT1 phosphorylation.

This sequence belongs to the glycosyl hydrolase 79 family. As to quaternary structure, heterodimer; heterodimer formation between the 8 kDa and the 50 kDa subunits is required for enzyme activity. Interacts with TF; the interaction, inhibited by heparin, enhances the generation of activated factor X and activates coagulation. Interacts with HRG; the interaction is enhanced at acidic pH, partially inhibits binding of HPSE to cell surface receptors and modulates its enzymatic activity. Interacts with SDC1; the interaction enhances the shedding of SDC1. Interacts with HPSE2. Post-translationally, proteolytically processed. The cleavage of the 65 kDa form leads to the generation of a linker peptide, and the 8 kDa and 50 kDa products. The active form, the 8/50 kDa heterodimer, is resistant to degradation. Complete removal of the linker peptide appears to be a prerequisite to the complete activation of the enzyme. N-glycosylated. Glycosylation of the 50 kDa subunit appears to be essential for its solubility.

It localises to the lysosome membrane. Its subcellular location is the secreted. It is found in the nucleus. It catalyses the reaction endohydrolysis of (1-&gt;4)-beta-D-glycosidic bonds of heparan sulfate chains in heparan sulfate proteoglycan.. Its activity is regulated as follows. Inhibited by laminarin sulfate and, to a lower extent, by heparin and sulfamin. Activated by calcium and magnesium. Inhibited by EDTA. Its function is as follows. Endoglycosidase that cleaves heparan sulfate proteoglycans (HSPGs) into heparan sulfate side chains and core proteoglycans. Participates in extracellular matrix (ECM) degradation and remodeling. Selectively cleaves the linkage between a glucuronic acid unit and an N-sulfo glucosamine unit carrying either a 3-O-sulfo or a 6-O-sulfo group. Can also cleave the linkage between a glucuronic acid unit and an N-sulfo glucosamine unit carrying a 2-O-sulfo group, but not linkages between a glucuronic acid unit and a 2-O-sulfated iduronic acid moiety. It is essentially inactive at neutral pH but becomes active under acidic conditions such as during tumor invasion and in inflammatory processes. Facilitates cell migration associated with metastasis, wound healing and inflammation. Enhances shedding of syndecans, and increases endothelial invasion and angiogenesis in myelomas. Acts as a procoagulant by increasing the generation of activation factor X in the presence of tissue factor and activation factor VII. Increases cell adhesion to the extracellular matrix (ECM), independent of its enzymatic activity. Induces AKT1/PKB phosphorylation via lipid rafts increasing cell mobility and invasion. Heparin increases this AKT1/PKB activation. Regulates osteogenesis. Enhances angiogenesis through up-regulation of SRC-mediated activation of VEGF. Implicated in hair follicle inner root sheath differentiation and hair homeostasis. This chain is Heparanase (Hpse), found in Rattus norvegicus (Rat).